Consider the following 289-residue polypeptide: Eukaryotic translation initiation factor 3 subunit F (289 aa).

The 131-residue stretch at Val-7–Gly-137 folds into the MPN domain.

It belongs to the eIF-3 subunit F family. In terms of assembly, component of the eukaryotic translation initiation factor 3 (eIF-3) complex.

It is found in the cytoplasm. Component of the eukaryotic translation initiation factor 3 (eIF-3) complex, which is involved in protein synthesis of a specialized repertoire of mRNAs and, together with other initiation factors, stimulates binding of mRNA and methionyl-tRNAi to the 40S ribosome. The eIF-3 complex specifically targets and initiates translation of a subset of mRNAs involved in cell proliferation. The protein is Eukaryotic translation initiation factor 3 subunit F of Bombyx mori (Silk moth).